The following is a 293-amino-acid chain: Ribosomal protein L11 methyltransferase (293 aa).

S-adenosyl-L-methionine is bound by residues threonine 145, glycine 166, aspartate 188, and asparagine 230.

This sequence belongs to the methyltransferase superfamily. PrmA family.

The protein localises to the cytoplasm. The enzyme catalyses L-lysyl-[protein] + 3 S-adenosyl-L-methionine = N(6),N(6),N(6)-trimethyl-L-lysyl-[protein] + 3 S-adenosyl-L-homocysteine + 3 H(+). Methylates ribosomal protein L11. This chain is Ribosomal protein L11 methyltransferase, found in Shewanella piezotolerans (strain WP3 / JCM 13877).